The following is a 294-amino-acid chain: Nucleotide-binding protein Dde_1774 (294 aa).

An ATP-binding site is contributed by 14–21 (GLSGAGKS). 66-69 (DLRQ) serves as a coordination point for GTP.

The protein belongs to the RapZ-like family.

Its function is as follows. Displays ATPase and GTPase activities. This is Nucleotide-binding protein Dde_1774 from Oleidesulfovibrio alaskensis (strain ATCC BAA-1058 / DSM 17464 / G20) (Desulfovibrio alaskensis).